The chain runs to 387 residues: Alkanesulfonate monooxygenase (387 aa).

The protein belongs to the SsuD family.

The catalysed reaction is an alkanesulfonate + FMNH2 + O2 = an aldehyde + FMN + sulfite + H2O + 2 H(+). In terms of biological role, catalyzes the desulfonation of aliphatic sulfonates. The polypeptide is Alkanesulfonate monooxygenase (Ralstonia nicotianae (strain ATCC BAA-1114 / GMI1000) (Ralstonia solanacearum)).